The sequence spans 370 residues: Phosphoserine aminotransferase (370 aa).

Arg42 contacts L-glutamate. Residues Trp108, Thr158, Asp182, and Gln205 each coordinate pyridoxal 5'-phosphate. Lys206 bears the N6-(pyridoxal phosphate)lysine mark. 247–248 serves as a coordination point for pyridoxal 5'-phosphate; it reads NT.

This sequence belongs to the class-V pyridoxal-phosphate-dependent aminotransferase family. SerC subfamily. As to quaternary structure, homodimer. Pyridoxal 5'-phosphate is required as a cofactor.

The protein localises to the cytoplasm. It carries out the reaction O-phospho-L-serine + 2-oxoglutarate = 3-phosphooxypyruvate + L-glutamate. The catalysed reaction is 4-(phosphooxy)-L-threonine + 2-oxoglutarate = (R)-3-hydroxy-2-oxo-4-phosphooxybutanoate + L-glutamate. The protein operates within amino-acid biosynthesis; L-serine biosynthesis; L-serine from 3-phospho-D-glycerate: step 2/3. Its pathway is cofactor biosynthesis; pyridoxine 5'-phosphate biosynthesis; pyridoxine 5'-phosphate from D-erythrose 4-phosphate: step 3/5. In terms of biological role, catalyzes the reversible conversion of 3-phosphohydroxypyruvate to phosphoserine and of 3-hydroxy-2-oxo-4-phosphonooxybutanoate to phosphohydroxythreonine. The chain is Phosphoserine aminotransferase from Albidiferax ferrireducens (strain ATCC BAA-621 / DSM 15236 / T118) (Rhodoferax ferrireducens).